Reading from the N-terminus, the 242-residue chain is N-alpha-acetyltransferase 60 (242 aa).

Over 1–192 (MTEVVPSSAL…GGHPPWTILD (192 aa)) the chain is Cytoplasmic. Positions 13–182 (VSLRLLCHDD…DGFTYVLYIN (170 aa)) constitute an N-acetyltransferase domain. Tyrosine 38 provides a ligand contact to substrate. Lysine 79 is modified (N6-acetyllysine; by autocatalysis). The active site involves tyrosine 97. Leucine 99 contributes to the substrate binding site. 101–103 (LGV) is an acetyl-CoA binding site. Lysine 105, lysine 109, and lysine 121 each carry N6-acetyllysine; by autocatalysis. Acetyl-CoA is bound at residue 109–114 (KHGIGS). Residue histidine 138 is part of the active site. Acetyl-CoA-binding positions include asparagine 143 and 150 to 153 (YENR). The required for homodimerization stretch occupies residues 162–173 (PYYYSIRGVLKD). Substrate is bound at residue tyrosine 165. Residues 193–236 (YIQHLGSALANLSPCSIPHRIYRQAHSLLCSFLPWSSISTKGGI) constitute an intramembrane region (helical). At 237 to 242 (EYSRTM) the chain is on the cytoplasmic side.

The protein belongs to the acetyltransferase family. NAA60 subfamily. In terms of assembly, monomer and homodimer; monomer in presence of substrate and homodimer in its absence. Acetylated: autoacetylation is required for optimal acetyltransferase activity.

The protein localises to the golgi apparatus membrane. The enzyme catalyses N-terminal L-methionyl-[transmembrane protein] + acetyl-CoA = N-terminal N(alpha)-acetyl-L-methionyl-[transmembrane protein] + CoA + H(+). It carries out the reaction L-lysyl-[protein] + acetyl-CoA = N(6)-acetyl-L-lysyl-[protein] + CoA + H(+). In terms of biological role, N-alpha-acetyltransferase that specifically mediates the acetylation of N-terminal residues of the transmembrane proteins, with a strong preference for N-termini facing the cytosol. Displays N-terminal acetyltransferase activity towards a range of N-terminal sequences including those starting with Met-Lys, Met-Val, Met-Ala and Met-Met. Required for normal chromosomal segregation during anaphase. May also show histone acetyltransferase activity; such results are however unclear in vivo and would require additional experimental evidences. This chain is N-alpha-acetyltransferase 60 (Naa60), found in Mus musculus (Mouse).